Here is a 175-residue protein sequence, read N- to C-terminus: Large ribosomal subunit protein uL22y (175 aa).

Positions glutamate 153–glutamate 163 are enriched in basic and acidic residues. The segment at glutamate 153–alanine 175 is disordered.

The protein belongs to the universal ribosomal protein uL22 family.

This chain is Large ribosomal subunit protein uL22y (RPL17B), found in Arabidopsis thaliana (Mouse-ear cress).